We begin with the raw amino-acid sequence, 543 residues long: Probable ubiquitin-conjugating enzyme E2 26 (543 aa).

A disordered region spans residues 1–21; that stretch reads MEPDVVEIPPPPLIASGSRTR. Residues 271–431 form the UBC core domain; it reads NWVKKVQADW…VFLLSLKTMV (161 aa). Residue cysteine 357 is the Glycyl thioester intermediate of the active site. The disordered stretch occupies residues 514–543; sequence LAEKPEPPMSNANTENQSKKKTRKRSRSSR. Positions 532–543 are enriched in basic residues; the sequence is KKKTRKRSRSSR.

Belongs to the ubiquitin-conjugating enzyme family.

It catalyses the reaction S-ubiquitinyl-[E1 ubiquitin-activating enzyme]-L-cysteine + [E2 ubiquitin-conjugating enzyme]-L-cysteine = [E1 ubiquitin-activating enzyme]-L-cysteine + S-ubiquitinyl-[E2 ubiquitin-conjugating enzyme]-L-cysteine.. Its pathway is protein modification; protein ubiquitination. In terms of biological role, accepts the ubiquitin from the E1 complex and catalyzes its covalent attachment to other proteins. In Arabidopsis thaliana (Mouse-ear cress), this protein is Probable ubiquitin-conjugating enzyme E2 26 (UBC26).